The chain runs to 245 residues: MSSDLVSKGMAQVFTGLGILLGAGRISSETHEEIMALLSADPGSNTGIMTGTNTGSTSIIPTQSKRVDMGDIPAGLPRPGKETPVSIQSHDLLGLGADLSTEAVQPPETFRAQASPSAPSKELKIICPWWLTDGYSCREHDQGKCPFYHDNVAGGVKHPLICHFWADGGRCTKSQKDCRFAHYPAPHRVTAPMPSKKKSKKLRSSVADDASHPDLGKARRHDPRDDEQNDEVWRNQGRARPGQEW.

2 C3H1-type zinc fingers span residues 121 to 152 (KELK…HDNV) and 161 to 185 (ICHF…HYPA). The tract at residues 186 to 245 (PHRVTAPMPSKKKSKKLRSSVADDASHPDLGKARRHDPRDDEQNDEVWRNQGRARPGQEW) is disordered. The segment covering 209-226 (DASHPDLGKARRHDPRDD) has biased composition (basic and acidic residues).

Part of the gene cluster that mediates the biosynthesis of the brasilane terpene glycosides brasilane D and E. The biosynthesis starts with the activity of the terpene cyclase braA that converts farnesyl pyrophosphate into the sesquiterpene alcohol trichobrasilenol. Subsequently, trichobrasilenol is glycosylated by the O-glycosyltransferase braB putatively using UDP-GlcNAc as sugar donor to yield brasilane A. The latter then undergoes two rounds of oxidation performed by the cytochrome P450 monooxygenase braC. In the first round braC hydroxylates C-12 forming brasilane D, which serves as substrate in the second round to establish the epoxide at the bond between C-5 and C-10 and oxidize the alcohol at C-12 to an aldehyde leading to the final product brasilane E. The polypeptide is Brasilane terpene glycosides biosynthesis cluster protein D (Annulohypoxylon truncatum (Hypoxylon truncatum)).